Reading from the N-terminus, the 275-residue chain is Putative phosphoenolpyruvate synthase regulatory protein (275 aa).

ADP is bound at residue 153-160 (GVSRSGKT).

It belongs to the pyruvate, phosphate/water dikinase regulatory protein family. PSRP subfamily.

The catalysed reaction is [pyruvate, water dikinase] + ADP = [pyruvate, water dikinase]-phosphate + AMP + H(+). The enzyme catalyses [pyruvate, water dikinase]-phosphate + phosphate + H(+) = [pyruvate, water dikinase] + diphosphate. In terms of biological role, bifunctional serine/threonine kinase and phosphorylase involved in the regulation of the phosphoenolpyruvate synthase (PEPS) by catalyzing its phosphorylation/dephosphorylation. This is Putative phosphoenolpyruvate synthase regulatory protein from Nitrosomonas eutropha (strain DSM 101675 / C91 / Nm57).